A 149-amino-acid polypeptide reads, in one-letter code: Hut operon positive regulatory protein (149 aa).

It belongs to the HutP family. Homohexamer.

Antiterminator that binds to cis-acting regulatory sequences on the mRNA in the presence of histidine, thereby suppressing transcription termination and activating the hut operon for histidine utilization. The protein is Hut operon positive regulatory protein of Geobacillus thermodenitrificans (strain NG80-2).